The following is a 743-amino-acid chain: 1,4-alpha-glucan branching enzyme GlgB (743 aa).

The active-site Nucleophile is Asp-416. Residue Glu-469 is the Proton donor of the active site.

Belongs to the glycosyl hydrolase 13 family. GlgB subfamily. As to quaternary structure, monomer.

The enzyme catalyses Transfers a segment of a (1-&gt;4)-alpha-D-glucan chain to a primary hydroxy group in a similar glucan chain.. It functions in the pathway glycan biosynthesis; glycogen biosynthesis. Its function is as follows. Catalyzes the formation of the alpha-1,6-glucosidic linkages in glycogen by scission of a 1,4-alpha-linked oligosaccharide from growing alpha-1,4-glucan chains and the subsequent attachment of the oligosaccharide to the alpha-1,6 position. The protein is 1,4-alpha-glucan branching enzyme GlgB of Shewanella baltica (strain OS155 / ATCC BAA-1091).